The following is a 412-amino-acid chain: Putative gustatory receptor 58c (412 aa).

The next 2 membrane-spanning stretches (helical) occupy residues 39–59 and 72–92; these read VVYCVILNVVYLLVLPFALFV and MFGVVYNVVALTKLLTMLFLM. A glycan (N-linked (GlcNAc...) asparagine) is linked at Asn158. Residues 173-193 form a helical membrane-spanning segment; sequence IVYALIMILLMSYVDMTVYMV. The N-linked (GlcNAc...) asparagine glycan is linked to Asn203. 3 consecutive transmembrane segments (helical) span residues 224–241, 262–282, and 296–316; these read IPREMGLMQILAAWRKLW, VLFNLLTTYIFSIAVLFRLWI, and ILYAIIFLTHHVEIVMQFSIF. N-linked (GlcNAc...) asparagine glycans are attached at residues Asn337, Asn386, and Asn391.

It belongs to the insect chemoreceptor superfamily. Gustatory receptor (GR) family. Gr10a subfamily.

The protein localises to the cell membrane. Probable gustatory receptor which mediates acceptance or avoidance behavior, depending on its substrates. This is Putative gustatory receptor 58c (Gr58c) from Drosophila melanogaster (Fruit fly).